The sequence spans 524 residues: 5'-AMP-activated protein kinase subunit gamma-2 (524 aa).

Residues 1–178 (MPLLDGDLEG…TRPPLASPTH (178 aa)) are disordered. 8 positions are modified to phosphoserine: serine 21, serine 27, serine 29, serine 46, serine 94, serine 99, serine 117, and serine 118. A compositionally biased stretch (low complexity) spans 112–123 (TSGLSSSPSTPT). At threonine 121 the chain carries Phosphothreonine. Residues 135 to 145 (SYKHEPERLEN) are compositionally biased toward basic and acidic residues. Residues 148-168 (YASSSPPDTGQRFCPSSFQSP) show a composition bias toward polar residues. Serine 152 is modified (phosphoserine). 3 CBS domains span residues 230-290 (PTSS…KSPM), 312-370 (TFKP…MSDM), and 385-447 (IGTY…NLDI). ADP is bound by residues arginine 257, 272–277 (MLTITD), valine 317, 338–339 (HR), and lysine 357. AMP contacts are provided by residues arginine 257, 272 to 277 (MLTITD), valine 317, histidine 338, 338 to 339 (HR), lysine 357, threonine 387, alanine 392, 413 to 414 (SA), 429 to 432 (SKFD), arginine 456, histidine 485, 485 to 486 (HR), and 501 to 504 (SLSD). ATP is bound by residues arginine 257, 272 to 277 (MLTITD), valine 317, 338 to 339 (HR), arginine 339, and lysine 357. An AMPK pseudosubstrate motif is present at residues 325-346 (LLDAVYSLIKNKIHRLPVIDPI). ADP contacts are provided by residues 429–432 (SKFD), arginine 456, and 485–486 (HR). Residues 429-432 (SKFD), arginine 456, and 485-486 (HR) each bind ATP. One can recognise a CBS 4 domain in the interval 459–517 (YFEGVVKCNKLEILETIVDRIVRAEVHRLVVANEADSIVGIISLSDILQALILTPAGAK).

It belongs to the 5'-AMP-activated protein kinase gamma subunit family. AMPK is a heterotrimer of an alpha catalytic subunit (PRKAA1 or PRKAA2), a beta (PRKAB1 or PRKAB2) and a gamma non-catalytic subunits (PRKAG1, PRKAG2 or PRKAG3). Interacts with FNIP1 and FNIP2. Phosphorylated by ULK1; leading to negatively regulate AMPK activity and suggesting the existence of a regulatory feedback loop between ULK1 and AMPK. In terms of processing, glycosylated; O-GlcNAcylated by OGT, promoting the AMP-activated protein kinase (AMPK) activity.

AMP/ATP-binding subunit of AMP-activated protein kinase (AMPK), an energy sensor protein kinase that plays a key role in regulating cellular energy metabolism. In response to reduction of intracellular ATP levels, AMPK activates energy-producing pathways and inhibits energy-consuming processes: inhibits protein, carbohydrate and lipid biosynthesis, as well as cell growth and proliferation. AMPK acts via direct phosphorylation of metabolic enzymes, and by longer-term effects via phosphorylation of transcription regulators. Also acts as a regulator of cellular polarity by remodeling the actin cytoskeleton; probably by indirectly activating myosin. Gamma non-catalytic subunit mediates binding to AMP, ADP and ATP, leading to activate or inhibit AMPK: AMP-binding results in allosteric activation of alpha catalytic subunit (PRKAA1 or PRKAA2) both by inducing phosphorylation and preventing dephosphorylation of catalytic subunits. ADP also stimulates phosphorylation, without stimulating already phosphorylated catalytic subunit. ATP promotes dephosphorylation of catalytic subunit, rendering the AMPK enzyme inactive. The polypeptide is 5'-AMP-activated protein kinase subunit gamma-2 (PRKAG2) (Pongo abelii (Sumatran orangutan)).